The sequence spans 172 residues: Translation initiation factor IF-3 (172 aa).

Belongs to the IF-3 family. Monomer.

The protein resides in the cytoplasm. In terms of biological role, IF-3 binds to the 30S ribosomal subunit and shifts the equilibrium between 70S ribosomes and their 50S and 30S subunits in favor of the free subunits, thus enhancing the availability of 30S subunits on which protein synthesis initiation begins. This Geobacter metallireducens (strain ATCC 53774 / DSM 7210 / GS-15) protein is Translation initiation factor IF-3.